Reading from the N-terminus, the 75-residue chain is Dermaseptin-A3 (75 aa).

The N-terminal stretch at 1 to 22 (MAFLKKSLFLVLLLGLISLSIC) is a signal peptide. Positions 23–43 (EEEKRENEVEEEQEDDEQSEL) are excised as a propeptide. Gln-72 bears the Glutamine amide mark. Residues 74-75 (EQ) constitute a propeptide that is removed on maturation.

The protein belongs to the frog skin active peptide (FSAP) family. Dermaseptin subfamily. In terms of tissue distribution, expressed by the skin glands.

It localises to the secreted. Its function is as follows. Possesses a potent antimicrobial activity against Gram-positive and Gram-negative bacteria. Probably acts by disturbing membrane functions with its amphipathic structure. The protein is Dermaseptin-A3 of Agalychnis annae (Blue-sided leaf frog).